A 594-amino-acid chain; its full sequence is Adenine deaminase 1 (594 aa).

This sequence belongs to the metallo-dependent hydrolases superfamily. Adenine deaminase family. It depends on Mn(2+) as a cofactor.

The catalysed reaction is adenine + H2O + H(+) = hypoxanthine + NH4(+). This is Adenine deaminase 1 from Jannaschia sp. (strain CCS1).